The following is a 375-amino-acid chain: DNA replication and repair protein RecF (375 aa).

30–37 (GENAQGKT) serves as a coordination point for ATP.

Belongs to the RecF family.

It localises to the cytoplasm. In terms of biological role, the RecF protein is involved in DNA metabolism; it is required for DNA replication and normal SOS inducibility. RecF binds preferentially to single-stranded, linear DNA. It also seems to bind ATP. This Bacillus mycoides (strain KBAB4) (Bacillus weihenstephanensis) protein is DNA replication and repair protein RecF.